The primary structure comprises 206 residues: MSSGAEKIVSSIMSEAQAKADAIIREAEDEAAGIVDEGEKRARMASERILESARKQADMRYQQIISEAKMNARRAELEAREEVIQEAFKKAEEELKNLASTSQEEYVSALRGMIKEAAVEIGGGDLVVSMREDDRSLDLGLDKIAAEVEAETGKKTTLKVGDSIRTIGGAVVRTEDGLIEVNNTIEARMSRFRKALRSEVARVLFE.

This sequence belongs to the V-ATPase E subunit family. Has multiple subunits with at least A(3), B(3), C, D, E, F, H, I and proteolipid K(x).

Its subcellular location is the cell membrane. Its function is as follows. Component of the A-type ATP synthase that produces ATP from ADP in the presence of a proton gradient across the membrane. This Methanothermobacter thermautotrophicus (strain ATCC 29096 / DSM 1053 / JCM 10044 / NBRC 100330 / Delta H) (Methanobacterium thermoautotrophicum) protein is A-type ATP synthase subunit E.